We begin with the raw amino-acid sequence, 51 residues long: Kunitz-like toxin PcKuz3 (51 aa).

Disulfide bonds link Cys1/Cys51, Cys10/Cys34, and Cys26/Cys47.

Belongs to the venom Kunitz-type family. Sea anemone type 2 potassium channel toxin subfamily.

Its subcellular location is the secreted. It is found in the nematocyst. Potent toxin and weak serine protease inhibitor that displays activity on both trypsin and elastase. May act as a neurotoxin by blocking voltage-gated potassium channels (Kv1.1/KCNA1 and Kv1.2/KCNA2). Has a neuroprotective effect, since it suppress, at low concentration, the 6-hydroxydopamine-induced neurotoxicity on the locomotive behavior of zebrafish. In vivo, has strong reversible antilocomotor activity. In addition, it is lethal to zebrafish larvae at high doses. The polypeptide is Kunitz-like toxin PcKuz3 (Palythoa caribaeorum (White encrusting zoanthid coral)).